A 503-amino-acid chain; its full sequence is Angiopoietin-4 (503 aa).

The first 24 residues, 1-24 (MLSQLAMLQGSLLLVVATMSVAQQ), serve as a signal peptide directing secretion. A coiled-coil region spans residues 84 to 238 (TQQVKQLEQA…RQSAALTNIE (155 aa)). N-linked (GlcNAc...) asparagine glycosylation is found at Asn-96, Asn-126, Asn-140, Asn-158, Asn-247, Asn-274, Asn-311, Asn-337, and Asn-427. Positions 282 to 502 (MAGEQVFQDC…ASRMMIRPLD (221 aa)) constitute a Fibrinogen C-terminal domain. A disulfide bridge connects residues Cys-291 and Cys-320. Residues Cys-444 and Cys-457 are joined by a disulfide bond.

Homodimer; disulfide-linked. Interacts with TEK/TIE2. Highly expressed in the lung with much lower levels found in other tissues.

It is found in the secreted. Its function is as follows. Binds to TEK/TIE2, modulating ANGPT1 signaling. Can induce tyrosine phosphorylation of TEK/TIE2. Promotes endothelial cell survival, migration and angiogenesis. The chain is Angiopoietin-4 (ANGPT4) from Homo sapiens (Human).